The chain runs to 343 residues: UDP-3-O-acylglucosamine N-acyltransferase 2 (343 aa).

The active-site Proton acceptor is the His-251.

It belongs to the transferase hexapeptide repeat family. LpxD subfamily. In terms of assembly, homotrimer.

The catalysed reaction is a UDP-3-O-[(3R)-3-hydroxyacyl]-alpha-D-glucosamine + a (3R)-hydroxyacyl-[ACP] = a UDP-2-N,3-O-bis[(3R)-3-hydroxyacyl]-alpha-D-glucosamine + holo-[ACP] + H(+). It functions in the pathway bacterial outer membrane biogenesis; LPS lipid A biosynthesis. In terms of biological role, catalyzes the N-acylation of UDP-3-O-acylglucosamine using 3-hydroxyacyl-ACP as the acyl donor. Is involved in the biosynthesis of lipid A, a phosphorylated glycolipid that anchors the lipopolysaccharide to the outer membrane of the cell. This Legionella pneumophila (strain Lens) protein is UDP-3-O-acylglucosamine N-acyltransferase 2.